We begin with the raw amino-acid sequence, 139 residues long: Acidic phospholipase A2 S1E6-c (139 aa).

The first 16 residues, 1-16 (MRTLWILAVLLVGVEG), serve as a signal peptide directing secretion. 7 disulfide bridges follow: C42–C132, C44–C60, C59–C111, C65–C139, C66–C104, C73–C97, and C91–C102. Residues Y43, G45, and G47 each coordinate Ca(2+). The active site involves H63. D64 is a Ca(2+) binding site. D105 is a catalytic residue.

The protein belongs to the phospholipase A2 family. Group II subfamily. D49 sub-subfamily. As to quaternary structure, homodimer. Requires Ca(2+) as cofactor. As to expression, expressed by the venom gland.

The protein resides in the secreted. It catalyses the reaction a 1,2-diacyl-sn-glycero-3-phosphocholine + H2O = a 1-acyl-sn-glycero-3-phosphocholine + a fatty acid + H(+). Its function is as follows. Snake venom phospholipase A2 (PLA2) that inhibits ADP-induced platelet aggregation. PLA2 catalyzes the calcium-dependent hydrolysis of the 2-acyl groups in 3-sn-phosphoglycerides. This chain is Acidic phospholipase A2 S1E6-c, found in Calloselasma rhodostoma (Malayan pit viper).